The following is a 508-amino-acid chain: Photosystem II CP47 reaction center protein (508 aa).

6 helical membrane-spanning segments follow: residues serine 21–serine 36, isoleucine 101–tryptophan 115, glycine 140–phenylalanine 156, isoleucine 203–serine 218, valine 237–valine 252, and threonine 457–arginine 472.

This sequence belongs to the PsbB/PsbC family. PsbB subfamily. As to quaternary structure, PSII is composed of 1 copy each of membrane proteins PsbA, PsbB, PsbC, PsbD, PsbE, PsbF, PsbH, PsbI, PsbJ, PsbK, PsbL, PsbM, PsbT, PsbX, PsbY, PsbZ, Psb30/Ycf12, at least 3 peripheral proteins of the oxygen-evolving complex and a large number of cofactors. It forms dimeric complexes. Requires Binds multiple chlorophylls. PSII binds additional chlorophylls, carotenoids and specific lipids. as cofactor.

The protein resides in the plastid. The protein localises to the chloroplast thylakoid membrane. In terms of biological role, one of the components of the core complex of photosystem II (PSII). It binds chlorophyll and helps catalyze the primary light-induced photochemical processes of PSII. PSII is a light-driven water:plastoquinone oxidoreductase, using light energy to abstract electrons from H(2)O, generating O(2) and a proton gradient subsequently used for ATP formation. The chain is Photosystem II CP47 reaction center protein from Oryza sativa subsp. indica (Rice).